Reading from the N-terminus, the 570-residue chain is Proline--tRNA ligase (570 aa).

Belongs to the class-II aminoacyl-tRNA synthetase family. ProS type 1 subfamily. In terms of assembly, homodimer.

Its subcellular location is the cytoplasm. It carries out the reaction tRNA(Pro) + L-proline + ATP = L-prolyl-tRNA(Pro) + AMP + diphosphate. Functionally, catalyzes the attachment of proline to tRNA(Pro) in a two-step reaction: proline is first activated by ATP to form Pro-AMP and then transferred to the acceptor end of tRNA(Pro). As ProRS can inadvertently accommodate and process non-cognate amino acids such as alanine and cysteine, to avoid such errors it has two additional distinct editing activities against alanine. One activity is designated as 'pretransfer' editing and involves the tRNA(Pro)-independent hydrolysis of activated Ala-AMP. The other activity is designated 'posttransfer' editing and involves deacylation of mischarged Ala-tRNA(Pro). The misacylated Cys-tRNA(Pro) is not edited by ProRS. The polypeptide is Proline--tRNA ligase (Neisseria meningitidis serogroup A / serotype 4A (strain DSM 15465 / Z2491)).